The primary structure comprises 461 residues: Probable tubulin polyglutamylase TTLL9 (461 aa).

The tract at residues 1–21 (MSRPKNQNYKGHGLQKGKERE) is disordered. Residues 22–402 (QRASIRFKTT…EARLTGREKR (381 aa)) enclose the TTL domain. Residues Lys-149 and 155–156 (QG) each bind ATP. An a protein-binding site is contributed by Gln-155. Residues 182 to 208 (SLEAQPARNTVNPSGSHDTRSSDDQKD) are disordered. Residues 188-197 (ARNTVNPSGS) are compositionally biased toward polar residues. Over residues 198–208 (HDTRSSDDQKD) the composition is skewed to basic and acidic residues. ATP-binding positions include 218–221 (QRYI) and 231–233 (KFD). Arg-257 contacts L-glutamate. An ATP-binding site is contributed by 276-277 (TN). Lys-294 is a binding site for L-glutamate. Residues Asp-348, Glu-361, and Asn-363 each contribute to the Mg(2+) site. Lys-379 is a binding site for L-glutamate.

It belongs to the tubulin--tyrosine ligase family. It depends on Mg(2+) as a cofactor.

It localises to the cytoplasm. It is found in the cytoskeleton. Its subcellular location is the cilium basal body. The protein localises to the flagellum axoneme. The catalysed reaction is (L-glutamyl)(n)-gamma-L-glutamyl-L-glutamyl-[protein] + L-glutamate + ATP = (L-glutamyl)(n+1)-gamma-L-glutamyl-L-glutamyl-[protein] + ADP + phosphate + H(+). Its function is as follows. Probable tubulin polyglutamylase that generates side chains of glutamate on the gamma-carboxyl group of specific glutamate residues within the C-terminal tail of target proteins. Similar to TTLL1, may acquire enzymatic activity only in complex with other proteins as it is most likely lacking domains important for autonomous activity. Mediates tubulin polyglutamylation which induces establishment of microtubule heterogeneity in sperm flagella, thereby playing a role in normal motile flagella axoneme structure and sperm flagella beating pattern. The protein is Probable tubulin polyglutamylase TTLL9 (TTLL9) of Bos taurus (Bovine).